We begin with the raw amino-acid sequence, 247 residues long: Transmembrane protein 33 (247 aa).

Alanine 2 is subject to N-acetylalanine. At 2 to 31 the chain is on the lumenal side; that stretch reads ADTTPNGPQGAGAVQFMMTNKLDTAMWLSR. Residues 32–52 form a helical membrane-spanning segment; that stretch reads LFTVYCSALFVLPLLGLHEAA. At 53–100 the chain is on the cytoplasmic side; sequence SFYQRALLANALTSALRLHQRLPHFQLSRAFLAQALLEDSCHYLLYSL. The helical transmembrane segment at 101 to 121 threads the bilayer; it reads IFVNSYPVTMSIFPVLLFSLL. At 122–155 the chain is on the lumenal side; it reads HAATYTKKVLDARGSNSLPLLRSVLDKLSANQQN. Residues 156–176 form a helical membrane-spanning segment; that stretch reads ILKFIACNEIFLMPATVFMLF. Topologically, residues 177 to 247 are cytoplasmic; it reads SGQGSLLQPF…FISRLAPTVP (71 aa).

This sequence belongs to the PER33/POM33 family. Interacts with EIF2AK3. Interacts with ARL6IP1, isoform RTN1-A of RTN1, isoform RTN2-B of RTN2, isoform 3 of RTN3 and isoform 3 of RTN4. Interacts with RNF5. Interacts with RNF26. Interacts with PKD2. Prostate cancer and several cancer cell lines (at protein level). Widely expressed. Expressed at higher levels in endocrine-resistant breast cancer cells as compared to endocrine-sensitive breast cancer cells. Expressed at higher levels in early recurrence breast cancer tissues as compared to non-recurrent breast tumors.

It is found in the endoplasmic reticulum membrane. It localises to the melanosome. Its subcellular location is the nucleus envelope. Acts as a regulator of the tubular endoplasmic reticulum (ER) network by modulating intracellular calcium homeostasis. Mechanistically, stimulates PKD2 calcium-dependent activity. Suppresses the RTN3/4-induced formation of the ER tubules. Positively regulates PERK-mediated and IRE1-mediated unfolded protein response signaling. Plays an essential role in VEGF-mediated release of Ca(2+) from ER stores during angiogenesis. Also plays a role in the modulation of innate immune signaling through the cGAS-STING pathway by interacting with RNF26. Participates in lipid metabolism by acting as a downstream effector of the pyruvate kinase/PKM. Forms a complex with RNF5 to facilitate polyubiquitination and subsequent degradation of SCAP on the ER membrane. The chain is Transmembrane protein 33 (TMEM33) from Homo sapiens (Human).